The sequence spans 537 residues: Protein disulfide isomerase-like 1-5 (537 aa).

The N-terminal stretch at 1 to 29 (MSLIPKPISKVSTFTFILLILLSFTIIIA) is a signal peptide. The Thioredoxin 1 domain occupies 58–184 (LQEDRPEQQS…IVIWVQKKTG (127 aa)). Residue Cys106 is the Nucleophile of the active site. Asn160, Asn364, and Asn416 each carry an N-linked (GlcNAc...) asparagine glycan. Positions 380–526 (LLESDPSPNS…IAVFINEELL (147 aa)) constitute a Thioredoxin 2 domain. Catalysis depends on nucleophile residues Cys447 and Cys450. The cysteines at positions 447 and 450 are disulfide-linked. Asn530 carries an N-linked (GlcNAc...) asparagine glycan. The short motif at 534–537 (KDEL) is the Prevents secretion from ER element.

Belongs to the protein disulfide isomerase family. As to expression, widely expressed.

The protein localises to the endoplasmic reticulum lumen. It carries out the reaction Catalyzes the rearrangement of -S-S- bonds in proteins.. Its function is as follows. Acts as a protein-folding catalyst that interacts with nascent polypeptides to catalyze the formation, isomerization, and reduction or oxidation of disulfide bonds. In Arabidopsis thaliana (Mouse-ear cress), this protein is Protein disulfide isomerase-like 1-5 (PDIL1-5).